Here is an 81-residue protein sequence, read N- to C-terminus: Conotoxin ArMKLT2-01 (81 aa).

Positions 1-19 (MKLTCVIIVVALFLTACHA) are cleaved as a signal peptide. Residues 20–43 (KDKQEHPAVRGSDDMQDSEDLKLA) constitute a propeptide that is removed on maturation. 3 disulfides stabilise this stretch: cysteine 46/cysteine 61, cysteine 53/cysteine 65, and cysteine 60/cysteine 74.

It belongs to the conotoxin O1 superfamily. Expressed by the venom duct.

The protein resides in the secreted. The chain is Conotoxin ArMKLT2-01 from Conus arenatus (Sand-dusted cone).